Reading from the N-terminus, the 229-residue chain is UPF0758 protein Ppro_3582 (229 aa).

The segment at 1-20 (MCPGIREWPEDERPREKMLR) is disordered. The span at 7-19 (EWPEDERPREKML) shows a compositional bias: basic and acidic residues. The MPN domain maps to 107 to 229 (RFTSPRQVFD…YLSFVERGVL (123 aa)). Residues His178, His180, and Asp191 each contribute to the Zn(2+) site. The JAMM motif signature appears at 178 to 191 (HNHPTGDPTPSQED).

This sequence belongs to the UPF0758 family.

This chain is UPF0758 protein Ppro_3582, found in Pelobacter propionicus (strain DSM 2379 / NBRC 103807 / OttBd1).